Here is a 150-residue protein sequence, read N- to C-terminus: 1,4-dihydroxy-2-naphthoyl-CoA hydrolase (150 aa).

Residue Asp19 is part of the active site.

It belongs to the 4-hydroxybenzoyl-CoA thioesterase family. DHNA-CoA hydrolase subfamily.

The enzyme catalyses 1,4-dihydroxy-2-naphthoyl-CoA + H2O = 1,4-dihydroxy-2-naphthoate + CoA + H(+). It participates in cofactor biosynthesis; phylloquinone biosynthesis. The protein operates within quinol/quinone metabolism; 1,4-dihydroxy-2-naphthoate biosynthesis; 1,4-dihydroxy-2-naphthoate from chorismate: step 7/7. Functionally, catalyzes the hydrolysis of 1,4-dihydroxy-2-naphthoyl-CoA (DHNA-CoA) to 1,4-dihydroxy-2-naphthoate (DHNA), a reaction involved in phylloquinone (vitamin K1) biosynthesis. This Prochlorococcus marinus (strain MIT 9215) protein is 1,4-dihydroxy-2-naphthoyl-CoA hydrolase.